Reading from the N-terminus, the 238-residue chain is Purine nucleoside phosphorylase DeoD-type (238 aa).

His-5 contributes to the a purine D-ribonucleoside binding site. Residues Gly-21, Arg-25, Arg-44, and 88–91 (RVGS) contribute to the phosphate site. Residues 180-182 (EME) and 204-205 (SD) each bind a purine D-ribonucleoside. Asp-205 (proton donor) is an active-site residue.

It belongs to the PNP/UDP phosphorylase family. In terms of assembly, homohexamer; trimer of homodimers.

It carries out the reaction a purine D-ribonucleoside + phosphate = a purine nucleobase + alpha-D-ribose 1-phosphate. The catalysed reaction is a purine 2'-deoxy-D-ribonucleoside + phosphate = a purine nucleobase + 2-deoxy-alpha-D-ribose 1-phosphate. In terms of biological role, catalyzes the reversible phosphorolytic breakdown of the N-glycosidic bond in the beta-(deoxy)ribonucleoside molecules, with the formation of the corresponding free purine bases and pentose-1-phosphate. In Photorhabdus laumondii subsp. laumondii (strain DSM 15139 / CIP 105565 / TT01) (Photorhabdus luminescens subsp. laumondii), this protein is Purine nucleoside phosphorylase DeoD-type.